A 171-amino-acid chain; its full sequence is S-ribosylhomocysteine lyase (171 aa).

Fe cation is bound by residues His-54, His-58, and Cys-128.

This sequence belongs to the LuxS family. Homodimer. Fe cation serves as cofactor.

It catalyses the reaction S-(5-deoxy-D-ribos-5-yl)-L-homocysteine = (S)-4,5-dihydroxypentane-2,3-dione + L-homocysteine. Involved in the synthesis of autoinducer 2 (AI-2) which is secreted by bacteria and is used to communicate both the cell density and the metabolic potential of the environment. The regulation of gene expression in response to changes in cell density is called quorum sensing. Catalyzes the transformation of S-ribosylhomocysteine (RHC) to homocysteine (HC) and 4,5-dihydroxy-2,3-pentadione (DPD). The polypeptide is S-ribosylhomocysteine lyase (Salmonella agona (strain SL483)).